The following is a 77-amino-acid chain: Liver-expressed antimicrobial peptide 2 (77 aa).

An N-terminal signal peptide occupies residues 1–22 (MWHLKLCAVLMIFLLLLGQIDG). Residues 23–37 (SPIPEVSSAKRRPRR) constitute a propeptide that is removed on maturation. Disulfide bonds link C54–C65 and C60–C70.

Belongs to the LEAP2 family.

Its subcellular location is the secreted. In terms of biological role, has an antimicrobial activity. The chain is Liver-expressed antimicrobial peptide 2 (LEAP2) from Homo sapiens (Human).